The primary structure comprises 187 residues: MKKIKEVIVVEGKDDTKRLALAVDADTLETNGSAISEATLAQIKTLQASRGVIVFTDPDFSGERIRKTISAAVPGVKHAFLPRKAGVPTKAGGSLGVEHASPAAIQTALAHLYTEQIDEPQQLISHHDLIAAGLLAGPTARQRREQLGERLGIGYVNGKQLPKRLQLFQIQPADFWAAVDQLTTEEK.

Residues Lys-5–Pro-88 enclose the Toprim domain. Residues Glu-11, Asp-57, and Asp-59 each coordinate Mg(2+).

Belongs to the ribonuclease M5 family. The cofactor is Mg(2+).

It is found in the cytoplasm. It catalyses the reaction Endonucleolytic cleavage of RNA, removing 21 and 42 nucleotides, respectively, from the 5'- and 3'-termini of a 5S-rRNA precursor.. Required for correct processing of both the 5' and 3' ends of 5S rRNA precursor. Cleaves both sides of a double-stranded region yielding mature 5S rRNA in one step. The sequence is that of Ribonuclease M5 from Lactiplantibacillus plantarum (strain ATCC BAA-793 / NCIMB 8826 / WCFS1) (Lactobacillus plantarum).